The chain runs to 95 residues: Selenoprotein K (95 aa).

A helical transmembrane segment spans residues 20 to 42 (LSFITDFFWGIAEFVVLFFRTLL). The interval 47–95 (KKRRGYGSSSDSRYDDGRGPPGNPPRRRMGRINHLQGPNPPPMAGGUGR) is disordered. A non-standard amino acid (selenocysteine) is located at residue Sec93.

The protein belongs to the selenoprotein K family. Interacts with DERL1, DERL2, DERL3 and SELENOS. The SELENOK-SELENOS complex interacts with VCP. Interacts with ZDHHC6. Cleaved by CAPN2/m-calpain in resting macrophages but not in activated macrophages. Macrophage activation up-regulates expression of the calpain inhibitor CAST/calpastatin, resulting in inhibition of CAPN2 activity. In terms of processing, truncated SELENOK proteins produced by failed UGA/Sec decoding are ubiquitinated by the CRL2(KLHDC2) complex, which recognizes the diglycine (Gly-Gly) at the C-terminus of truncated SELENOK proteins.

The protein localises to the endoplasmic reticulum membrane. Its subcellular location is the cell membrane. Required for Ca(2+) flux in immune cells and plays a role in T-cell proliferation and in T-cell and neutrophil migration. Involved in endoplasmic reticulum-associated degradation (ERAD) of soluble glycosylated proteins. Required for palmitoylation and cell surface expression of CD36 and involved in macrophage uptake of low-density lipoprotein and in foam cell formation. Together with ZDHHC6, required for palmitoylation of ITPR1 in immune cells, leading to regulate ITPR1 stability and function. Plays a role in protection of cells from ER stress-induced apoptosis. Protects cells from oxidative stress when overexpressed in cardiomyocytes. In Bos taurus (Bovine), this protein is Selenoprotein K.